We begin with the raw amino-acid sequence, 729 residues long: Polyribonucleotide nucleotidyltransferase (729 aa).

Positions 399 to 419 are disordered; the sequence is YMHNYNFPPYSTGETGRVGSP. Residues aspartate 509 and aspartate 515 each contribute to the Mg(2+) site. Residues 575–634 enclose the KH domain; that stretch reads PRVISVKIPVDKIGEVIGPKGKMINQIQADSGAEITVEDDGTIYIGAADGPAAETARSAI. The S1 motif domain maps to 646–718; sequence GERYLGTIVK…ARGKISLAPG (73 aa).

The protein belongs to the polyribonucleotide nucleotidyltransferase family. Mg(2+) is required as a cofactor.

The protein resides in the cytoplasm. It catalyses the reaction RNA(n+1) + phosphate = RNA(n) + a ribonucleoside 5'-diphosphate. Functionally, involved in mRNA degradation. Catalyzes the phosphorolysis of single-stranded polyribonucleotides processively in the 3'- to 5'-direction. The chain is Polyribonucleotide nucleotidyltransferase from Parafrankia sp. (strain EAN1pec).